Here is a 404-residue protein sequence, read N- to C-terminus: Cysteine desulfurase IscS (404 aa).

Pyridoxal 5'-phosphate-binding positions include 75–76 (AT), asparagine 155, glutamine 183, and 203–205 (SGH). Lysine 206 is modified (N6-(pyridoxal phosphate)lysine). Threonine 243 contacts pyridoxal 5'-phosphate. The active-site Cysteine persulfide intermediate is cysteine 328. Cysteine 328 serves as a coordination point for [2Fe-2S] cluster.

It belongs to the class-V pyridoxal-phosphate-dependent aminotransferase family. NifS/IscS subfamily. Homodimer. Forms a heterotetramer with IscU, interacts with other sulfur acceptors. The cofactor is pyridoxal 5'-phosphate.

The protein resides in the cytoplasm. The catalysed reaction is (sulfur carrier)-H + L-cysteine = (sulfur carrier)-SH + L-alanine. Its pathway is cofactor biosynthesis; iron-sulfur cluster biosynthesis. In terms of biological role, master enzyme that delivers sulfur to a number of partners involved in Fe-S cluster assembly, tRNA modification or cofactor biosynthesis. Catalyzes the removal of elemental sulfur atoms from cysteine to produce alanine. Functions as a sulfur delivery protein for Fe-S cluster synthesis onto IscU, an Fe-S scaffold assembly protein, as well as other S acceptor proteins. The protein is Cysteine desulfurase IscS of Pectobacterium atrosepticum (strain SCRI 1043 / ATCC BAA-672) (Erwinia carotovora subsp. atroseptica).